A 147-amino-acid polypeptide reads, in one-letter code: Large ribosomal subunit protein uL15 (147 aa).

The tract at residues 1-58 (MKLHELKPAQGSTKAPKRLGRGIGSGTGKTSGKGHKGQKARAGGGVRPGFEGGQQPLA) is disordered. 2 stretches are compositionally biased toward gly residues: residues 21 to 31 (RGIGSGTGKTS) and 42 to 52 (AGGGVRPGFEG).

This sequence belongs to the universal ribosomal protein uL15 family. In terms of assembly, part of the 50S ribosomal subunit.

Functionally, binds to the 23S rRNA. The sequence is that of Large ribosomal subunit protein uL15 from Desulfitobacterium hafniense (strain Y51).